Reading from the N-terminus, the 265-residue chain is NAD kinase (265 aa).

Residue aspartate 45 is the Proton acceptor of the active site. NAD(+)-binding positions include 45-46 (DG), 122-123 (NE), arginine 148, aspartate 150, 161-166 (TAYNKS), alanine 185, and glutamine 223.

The protein belongs to the NAD kinase family. The cofactor is a divalent metal cation.

It localises to the cytoplasm. The catalysed reaction is NAD(+) + ATP = ADP + NADP(+) + H(+). In terms of biological role, involved in the regulation of the intracellular balance of NAD and NADP, and is a key enzyme in the biosynthesis of NADP. Catalyzes specifically the phosphorylation on 2'-hydroxyl of the adenosine moiety of NAD to yield NADP. In Enterococcus faecalis (strain ATCC 700802 / V583), this protein is NAD kinase.